A 460-amino-acid chain; its full sequence is Cysteine--tRNA ligase (460 aa).

Cys-27 is a Zn(2+) binding site. The 'HIGH' region motif lies at Pro-29–Asn-39. Residues Cys-207, His-232, and Glu-236 each coordinate Zn(2+). Residues Lys-264 to Ser-268 carry the 'KMSKS' region motif. Lys-267 provides a ligand contact to ATP.

It belongs to the class-I aminoacyl-tRNA synthetase family. As to quaternary structure, monomer. It depends on Zn(2+) as a cofactor.

It is found in the cytoplasm. The catalysed reaction is tRNA(Cys) + L-cysteine + ATP = L-cysteinyl-tRNA(Cys) + AMP + diphosphate. The sequence is that of Cysteine--tRNA ligase from Thermotoga petrophila (strain ATCC BAA-488 / DSM 13995 / JCM 10881 / RKU-1).